The primary structure comprises 400 residues: 3-hydroxykynurenine transaminase (400 aa).

A binds to and confers specificity for 3-hydroxykynurenine; shared with dimeric partner region spans residues 43–44; sequence SN. Pyridoxal 5'-phosphate contacts are provided by residues 77-79, serine 154, and glutamine 204; that span reads SAH. Position 154 (serine 154) interacts with substrate. Lysine 205 is subject to N6-(pyridoxal phosphate)lysine. Residues tyrosine 256 and threonine 259 each coordinate pyridoxal 5'-phosphate. Arginine 356 provides a ligand contact to substrate.

The protein belongs to the class-V pyridoxal-phosphate-dependent aminotransferase family. Homodimer. May form homotetramer. The cofactor is pyridoxal 5'-phosphate.

Its subcellular location is the peroxisome. It carries out the reaction glyoxylate + L-alanine = glycine + pyruvate. It catalyses the reaction L-kynurenine + glyoxylate = kynurenate + glycine + H2O. The enzyme catalyses 3-hydroxy-L-kynurenine + glyoxylate = xanthurenate + glycine + H2O. The catalysed reaction is 3-hydroxy-L-kynurenine + pyruvate = xanthurenate + L-alanine + H2O. It carries out the reaction L-kynurenine + pyruvate = kynurenate + L-alanine + H2O. It catalyses the reaction 2-oxobutanoate + L-alanine = (2S)-2-aminobutanoate + pyruvate. The enzyme catalyses L-phenylalanine + pyruvate = 3-phenylpyruvate + L-alanine. The catalysed reaction is L-serine + pyruvate = 3-hydroxypyruvate + L-alanine. It carries out the reaction L-cysteine + pyruvate = 2-oxo-3-sulfanylpropanoate + L-alanine. It catalyses the reaction 3-hydroxy-L-kynurenine + oxaloacetate = 4-(2-amino-3-hydroxyphenyl)-2,4-dioxobutanoate + L-aspartate. The enzyme catalyses 3-hydroxy-L-kynurenine + 3-phenylpyruvate = 4-(2-amino-3-hydroxyphenyl)-2,4-dioxobutanoate + L-phenylalanine. The catalysed reaction is L-kynurenine + oxaloacetate = 4-(2-aminophenyl)-2,4-dioxobutanoate + L-aspartate. It carries out the reaction 3-phenylpyruvate + L-kynurenine = 4-(2-aminophenyl)-2,4-dioxobutanoate + L-phenylalanine. It functions in the pathway amino-acid degradation; L-kynurenine degradation; kynurenate from L-kynurenine: step 1/2. Its function is as follows. Catalyzes the pyridoxal 5'-phosphate-dependent transamination of both 3-hydroxykynurenine and L-kynurenine to xanthurenic acid and kynurenic acid, respectively, preferentially using the alpha-ketoacid pyruvate, glyoxylate or oxaloacetate as the amino group acceptor. The affinity and catalytic efficiency for 3-hydroxykynurenine is higher than for L-kynurenine. Involved in the detoxification of cytotoxic metabolite 3-hydroxykynurenine generated by the hydroxylation of L-kynurenine, an intermediate in the tryptophan catabolism pathway. Also catalyzes, although with a lesser efficiency, the transamination of alanine with glyoxylate as an amino group acceptor. May play a role in the detoxification of glyoxylate, a toxic plant metabolite from the diet. The sequence is that of 3-hydroxykynurenine transaminase from Aedes aegypti (Yellowfever mosquito).